Here is a 473-residue protein sequence, read N- to C-terminus: MHSLFLKILIYSLMQCVLGQAEFWDYDENVTQIEEDFKIDDVTRILKRVGNYNRNAYPLLDQDLATHVDIQMYIEGMSSFHAQSMDFQVDIYFQEKWVDHRLQHNNTKRILVKDPKLFGLLWHPDLYFANARTASFHDVTQPNFLVWIYPNGTVWYDCRISLTVLCMQDLARYPLDSQNCGLRILSYAYDEEQLIIRWNGGNPVEVNRGIRMPDMHLKHIKFYTKRDKYATGIWSSAVAEFHVDREITHHIIQSYIPTSLIVIISWFSFWLDVEAVPGRVSLSITTLLTLATQSSAARMALPQASDVKAIDVWMGTCMAFVFSAMIEFTVVNYCVRRKVRTKIKPRGLSEQVHDMVAQYREKKDKFNNGNCEISYEMALQPNEDNATVQRNFEKKEVREMNQASLFVRRSLLPTSKRKTIEDRINRVEENRKNAQKIDRYSRALFPLAFIIFNIFYWIYYLKYAGSNSPELLL.

Positions 1 to 19 (MHSLFLKILIYSLMQCVLG) are cleaved as a signal peptide. Over 20 to 249 (QAEFWDYDEN…EFHVDREITH (230 aa)) the chain is Extracellular. N-linked (GlcNAc...) asparagine glycans are attached at residues Asn-29, Asn-105, and Asn-151. Cys-166 and Cys-180 form a disulfide bridge. The chain crosses the membrane as a helical span at residues 250–271 (HIIQSYIPTSLIVIISWFSFWL). The Cytoplasmic segment spans residues 272–276 (DVEAV). A helical membrane pass occupies residues 277-297 (PGRVSLSITTLLTLATQSSAA). The Extracellular portion of the chain corresponds to 298 to 308 (RMALPQASDVK). A helical transmembrane segment spans residues 309–329 (AIDVWMGTCMAFVFSAMIEFT). At 330 to 439 (VVNYCVRRKV…NRKNAQKIDR (110 aa)) the chain is on the cytoplasmic side. The chain crosses the membrane as a helical span at residues 440–460 (YSRALFPLAFIIFNIFYWIYY). At 461 to 473 (LKYAGSNSPELLL) the chain is on the extracellular side.

It belongs to the ligand-gated ion channel (TC 1.A.9) family. Glycine receptor (TC 1.A.9.3) subfamily. As to quaternary structure, pentamer.

Its subcellular location is the postsynaptic cell membrane. It is found in the synapse. The protein resides in the cell membrane. In terms of biological role, glycine receptors are ligand-gated chloride channels. Channel opening is triggered by extracellular glycine. Contributes to the generation of inhibitory postsynaptic currents. The chain is Glycine receptor subunit beta-type 4 from Caenorhabditis elegans.